The sequence spans 274 residues: MSFVSKSPPIVNSASPTGQVNPMEVEKANKLLEINRLILWKCLELQHIKTAQNSTLEQRALSTELFNSYIQRLKANLAFVVSIASPRQMQVLTPPLSCPESLPQLEPLYKELRQYFQIAQTSTLSYPPSNGDSSSYANGTDLHGNTGTMQQEEKANPSLTRSDSVSSGSYITMQGANSLKAQQDLLNSFTGAPSNNSHNIPDPNLSQTFSATSMGPPNNNYSKFRTDNYLARSSNRSGTPNIQNEQSRFFDSQQAQVQARALMQRYQQGMEFNK.

Polar residues-rich tracts occupy residues 123–150 and 157–167; these read TLSYPPSNGDSSSYANGTDLHGNTGTMQ and PSLTRSDSVSS. The segment at 123–167 is disordered; it reads TLSYPPSNGDSSSYANGTDLHGNTGTMQQEEKANPSLTRSDSVSS.

Component of the SWI/SNF global transcription activator complex composed of at least arp9, arp42, snf5, snf22, snf30, sbf59, sol1, ssr1, ssr2, ssr3, ssr4 and tfg3.

It localises to the cytoplasm. Its subcellular location is the nucleus. Functionally, component of the SWI/SNF complex, an ATP-dependent chromatin remodeling complex, required for the positive and negative regulation of gene expression of a large number of genes. It changes chromatin structure by altering DNA-histone contacts within a nucleosome, leading eventually to a change in nucleosome position, thus facilitating or repressing binding of gene-specific transcription factors. This Schizosaccharomyces pombe (strain 972 / ATCC 24843) (Fission yeast) protein is SWI/SNF chromatin-remodeling complex subunit snf30 (snf30).